The chain runs to 101 residues: MEPVDPSLDPWNHPGSQPTTPCTKCYCKRCCFHCQWCFTTKGLGISYGRKKRRQRHRTPQSSQVHQNSLPKQPLSQARGDPTGPKESKKEVESKAKTDPCA.

The segment at 1-24 (MEPVDPSLDPWNHPGSQPTTPCTK) is interaction with human CREBBP. The transactivation stretch occupies residues 1 to 48 (MEPVDPSLDPWNHPGSQPTTPCTKCYCKRCCFHCQWCFTTKGLGISYG). Residues cysteine 22, cysteine 25, and cysteine 27 each coordinate Zn(2+). A cysteine-rich region spans residues 22-37 (CTKCYCKRCCFHCQWC). Lysine 28 carries the N6-acetyllysine; by host PCAF modification. The Zn(2+) site is built by cysteine 30, histidine 33, cysteine 34, and cysteine 37. Residues 38–48 (FTTKGLGISYG) are core. Basic residues predominate over residues 48–58 (GRKKRRQRHRT). The tract at residues 48 to 101 (GRKKRRQRHRTPQSSQVHQNSLPKQPLSQARGDPTGPKESKKEVESKAKTDPCA) is disordered. Positions 49–57 (RKKRRQRHR) match the Nuclear localization signal, RNA-binding (TAR), and protein transduction motif. The interval 49–86 (RKKRRQRHRTPQSSQVHQNSLPKQPLSQARGDPTGPKE) is interaction with the host capping enzyme RNGTT. N6-acetyllysine; by host EP300 and GCN5L2 occurs at positions 50 and 51. Arginine 52 and arginine 53 each carry asymmetric dimethylarginine; by host PRMT6. Residues 59–75 (PQSSQVHQNSLPKQPLS) show a composition bias toward polar residues. Residue lysine 71 forms a Glycyl lysine isopeptide (Lys-Gly) (interchain with G-Cter in ubiquitin) linkage. The short motif at 78 to 80 (RGD) is the Cell attachment site element. Positions 83 to 101 (GPKESKKEVESKAKTDPCA) are enriched in basic and acidic residues.

This sequence belongs to the lentiviruses Tat family. In terms of assembly, interacts with host CCNT1. Associates with the P-TEFb complex composed at least of Tat, P-TEFb (CDK9 and CCNT1), TAR RNA, RNA Pol II. Recruits the HATs CREBBP, TAF1/TFIID, EP300, PCAF and GCN5L2. Interacts with host KAT5/Tip60; this interaction targets the latter to degradation. Interacts with the host deacetylase SIRT1. Interacts with host capping enzyme RNGTT; this interaction stimulates RNGTT. Binds to host KDR, and to the host integrins ITGAV/ITGB3 and ITGA5/ITGB1. Interacts with host KPNB1/importin beta-1 without previous binding to KPNA1/importin alpha-1. Interacts with EIF2AK2. Interacts with host nucleosome assembly protein NAP1L1; this interaction may be required for the transport of Tat within the nucleus, since the two proteins interact at the nuclear rim. Interacts with host C1QBP/SF2P32; this interaction involves lysine-acetylated Tat. Interacts with the host chemokine receptors CCR2, CCR3 and CXCR4. Interacts with host DPP4/CD26; this interaction may trigger an anti-proliferative effect. Interacts with host LDLR. Interacts with the host extracellular matrix metalloproteinase MMP1. Interacts with host PRMT6; this interaction mediates Tat's methylation. Interacts with, and is ubiquitinated by MDM2/Hdm2. Interacts with host PSMC3 and HTATIP2. Interacts with STAB1; this interaction may overcome SATB1-mediated repression of IL2 and IL2RA (interleukin) in T cells by binding to the same domain than HDAC1. Interacts (when acetylated) with human CDK13, thereby increasing HIV-1 mRNA splicing and promoting the production of the doubly spliced HIV-1 protein Nef. Interacts with host TBP; this interaction modulates the activity of transcriptional pre-initiation complex. Interacts with host RELA. Interacts with host PLSCR1; this interaction negatively regulates Tat transactivation activity by altering its subcellular distribution. Post-translationally, asymmetrical arginine methylation by host PRMT6 seems to diminish the transactivation capacity of Tat and affects the interaction with host CCNT1. In terms of processing, acetylation by EP300, CREBBP, GCN5L2/GCN5 and PCAF regulates the transactivation activity of Tat. EP300-mediated acetylation of Lys-50 promotes dissociation of Tat from the TAR RNA through the competitive binding to PCAF's bromodomain. In addition, the non-acetylated Tat's N-terminus can also interact with PCAF. PCAF-mediated acetylation of Lys-28 enhances Tat's binding to CCNT1. Lys-50 is deacetylated by SIRT1. Polyubiquitination by host MDM2 does not target Tat to degradation, but activates its transactivation function and fosters interaction with CCNT1 and TAR RNA. Post-translationally, phosphorylated by EIF2AK2 on serine and threonine residues adjacent to the basic region important for TAR RNA binding and function. Phosphorylation of Tat by EIF2AK2 is dependent on the prior activation of EIF2AK2 by dsRNA.

The protein localises to the host nucleus. It is found in the host nucleolus. It localises to the host cytoplasm. The protein resides in the secreted. Functionally, transcriptional activator that increases RNA Pol II processivity, thereby increasing the level of full-length viral transcripts. Recognizes a hairpin structure at the 5'-LTR of the nascent viral mRNAs referred to as the transactivation responsive RNA element (TAR) and recruits the cyclin T1-CDK9 complex (P-TEFb complex) that will in turn hyperphosphorylate the RNA polymerase II to allow efficient elongation. The CDK9 component of P-TEFb and other Tat-activated kinases hyperphosphorylate the C-terminus of RNA Pol II that becomes stabilized and much more processive. Other factors such as HTATSF1/Tat-SF1, SUPT5H/SPT5, and HTATIP2 are also important for Tat's function. Besides its effect on RNA Pol II processivity, Tat induces chromatin remodeling of proviral genes by recruiting the histone acetyltransferases (HATs) CREBBP, EP300 and PCAF to the chromatin. This also contributes to the increase in proviral transcription rate, especially when the provirus integrates in transcriptionally silent region of the host genome. To ensure maximal activation of the LTR, Tat mediates nuclear translocation of NF-kappa-B by interacting with host RELA. Through its interaction with host TBP, Tat may also modulate transcription initiation. Tat can reactivate a latently infected cell by penetrating in it and transactivating its LTR promoter. In the cytoplasm, Tat is thought to act as a translational activator of HIV-1 mRNAs. Its function is as follows. Extracellular circulating Tat can be endocytosed by surrounding uninfected cells via the binding to several surface receptors such as CD26, CXCR4, heparan sulfate proteoglycans (HSPG) or LDLR. Neurons are rarely infected, but they internalize Tat via their LDLR. Through its interaction with nuclear HATs, Tat is potentially able to control the acetylation-dependent cellular gene expression. Modulates the expression of many cellular genes involved in cell survival, proliferation or in coding for cytokines or cytokine receptors. Tat plays a role in T-cell and neurons apoptosis. Tat induced neurotoxicity and apoptosis probably contribute to neuroAIDS. Circulating Tat also acts as a chemokine-like and/or growth factor-like molecule that binds to specific receptors on the surface of the cells, affecting many cellular pathways. In the vascular system, Tat binds to ITGAV/ITGB3 and ITGA5/ITGB1 integrins dimers at the surface of endothelial cells and competes with bFGF for heparin-binding sites, leading to an excess of soluble bFGF. The sequence is that of Protein Tat from Human immunodeficiency virus type 1 group M subtype F1 (isolate VI850) (HIV-1).